The sequence spans 430 residues: Cytochrome c biogenesis protein CcsB (430 aa).

Helical transmembrane passes span leucine 14–isoleucine 34, serine 72–arginine 92, and alanine 162–serine 182.

This sequence belongs to the Ccs1/CcsB family. May interact with CcsA.

Its subcellular location is the cellular thylakoid membrane. Functionally, required during biogenesis of c-type cytochromes (cytochrome c6 and cytochrome f) at the step of heme attachment. This chain is Cytochrome c biogenesis protein CcsB, found in Prochlorococcus marinus (strain MIT 9313).